The chain runs to 252 residues: Type III pantothenate kinase (252 aa).

6–13 (DMGNTRLK) provides a ligand contact to ATP. Substrate-binding positions include Tyr93 and 100 to 103 (GVDR). Asp102 serves as the catalytic Proton acceptor. An ATP-binding site is contributed by Thr126. A substrate-binding site is contributed by Thr179.

Belongs to the type III pantothenate kinase family. In terms of assembly, homodimer. NH4(+) is required as a cofactor. The cofactor is K(+).

The protein resides in the cytoplasm. It carries out the reaction (R)-pantothenate + ATP = (R)-4'-phosphopantothenate + ADP + H(+). The protein operates within cofactor biosynthesis; coenzyme A biosynthesis; CoA from (R)-pantothenate: step 1/5. Functionally, catalyzes the phosphorylation of pantothenate (Pan), the first step in CoA biosynthesis. This chain is Type III pantothenate kinase, found in Cellvibrio japonicus (strain Ueda107) (Pseudomonas fluorescens subsp. cellulosa).